The following is a 900-amino-acid chain: MPGNLSFKDRVVVITGAGGGLGKVYALAYASRGAKVVVNDLGGTLGGSGHNSKAADLVVDEIKKAGGIAVANYDSVNENGEKIIETAIKEFGRVDVLINNAGILRDVSFAKMTEREFASVVDVHLTGGYKLSRAAWPYMRSQKFGRIINTASPAGLFGNFGQANYSAAKMGLVGLAETLAKEGAKYNINVNSIAPLARSRMTENVLPPHILKQLGPEKIVPLVLYLTHESTKVSNSIFELAAGFFGQLRWERSSGQIFNPDPKTYTPEAILNKWKEITDYRDKPFNKTQHPYQLSDYNDLITKAKKLPPNEQGSVKIKSLCNKVVVVTGAGGGLGKSHAIWFARYGAKVVVNDIKDPFSVVEEINKLYGEGTAIPDSHDVVTEAPLIIQTAISKFQRVDILVNNAGILRDKSFLKMKDEEWFAVLKVHLFSTFSLSKAVWPIFTKQKSGFIINTTSTSGIYGNFGQANYAAAKAAILGFSKTIALEGAKRGIIVNVIAPHAETAMTKTIFSEKELSNHFDASQVSPLVVLLASEELQKYSGRRVIGQLFEVGGGWCGQTRWQRSSGYVSIKETIEPEEIKENWNHITDFSRNTINPSSTEESSMATLQAVQKAHSSKELDDGLFKYTTKDCILYNLGLGCTSKELKYTYENDPDFQVLPTFAVIPFMQATATLAMDNLVDNFNYAMLLHGEQYFKLCTPTMPSNGTLKTLAKPLQVLDKNGKAALVVGGFETYDIKTKKLIAYNEGSFFIRGAHVPPEKEVRDGKRAKFAVQNFEVPHGKVPDFEAEISTNKDQAALYRLSGDFNPLHIDPTLAKAVKFPTPILHGLCTLGISAKALFEHYGPYEELKVRFTNVVFPGDTLKVKAWKQGSVVVFQTIDTTRNVIVLDNAAVKLSQAKSKL.

2 short-chain dehydrogenase like regions span residues 6-230 (SFKD…THES) and 319-535 (SLCN…ASEE). Residues Ile14, Lys53, Asn100, Arg133, Tyr165, and Lys169 each coordinate NADP(+). The Proton donor role is filled by Tyr165. Lys169 serves as the catalytic Lowers pKa of active site Tyr. 8 residues coordinate (3R)-3-hydroxydecanoyl-CoA: His689, Gly690, Lys719, Asp803, Asn805, Gly826, Phe851, and Thr852. The MaoC-like domain occupies 775-887 (EVPHGKVPDF…DTTRNVIVLD (113 aa)). The short motif at 898–900 (SKL) is the Microbody targeting signal element.

Belongs to the short-chain dehydrogenases/reductases (SDR) family. As to quaternary structure, monomer.

The protein resides in the peroxisome. The enzyme catalyses a (3R)-3-hydroxyacyl-CoA = a (2E)-enoyl-CoA + H2O. The catalysed reaction is a (3R)-3-hydroxyacyl-CoA + NAD(+) = a 3-oxoacyl-CoA + NADH + H(+). It participates in lipid metabolism; fatty acid beta-oxidation. Functionally, second trifunctional enzyme acting on the beta-oxidation pathway for fatty acids, possessing hydratase-dehydrogenase-epimerase activities. Converts trans-2-enoyl-CoA via D-3-hydroxyacyl-CoA to 3-ketoacyl-CoA. The protein is Peroxisomal hydratase-dehydrogenase-epimerase (FOX2) of Saccharomyces cerevisiae (strain ATCC 204508 / S288c) (Baker's yeast).